Reading from the N-terminus, the 689-residue chain is Glycine--tRNA ligase beta subunit (689 aa).

The protein belongs to the class-II aminoacyl-tRNA synthetase family. Tetramer of two alpha and two beta subunits.

It localises to the cytoplasm. The catalysed reaction is tRNA(Gly) + glycine + ATP = glycyl-tRNA(Gly) + AMP + diphosphate. This chain is Glycine--tRNA ligase beta subunit, found in Edwardsiella ictaluri (strain 93-146).